We begin with the raw amino-acid sequence, 466 residues long: Ribulose bisphosphate carboxylase large chain (466 aa).

At Lys-5 the chain carries N6,N6,N6-trimethyllysine. Substrate-binding residues include Asn-114 and Thr-164. Catalysis depends on Lys-166, which acts as the Proton acceptor. Lys-168 contributes to the substrate binding site. Mg(2+)-binding residues include Lys-192, Asp-194, and Glu-195. Lys-192 is modified (N6-carboxylysine). Residue His-285 is the Proton acceptor of the active site. Positions 286, 318, and 370 each coordinate substrate.

This sequence belongs to the RuBisCO large chain family. Type I subfamily. In terms of assembly, heterohexadecamer of 8 large chains and 8 small chains; disulfide-linked. The disulfide link is formed within the large subunit homodimers. Requires Mg(2+) as cofactor. In terms of processing, the disulfide bond which can form in the large chain dimeric partners within the hexadecamer appears to be associated with oxidative stress and protein turnover.

Its subcellular location is the plastid. The protein localises to the chloroplast. The catalysed reaction is 2 (2R)-3-phosphoglycerate + 2 H(+) = D-ribulose 1,5-bisphosphate + CO2 + H2O. It carries out the reaction D-ribulose 1,5-bisphosphate + O2 = 2-phosphoglycolate + (2R)-3-phosphoglycerate + 2 H(+). Its function is as follows. RuBisCO catalyzes two reactions: the carboxylation of D-ribulose 1,5-bisphosphate, the primary event in carbon dioxide fixation, as well as the oxidative fragmentation of the pentose substrate in the photorespiration process. Both reactions occur simultaneously and in competition at the same active site. The chain is Ribulose bisphosphate carboxylase large chain from Adenium obesum (Desert rose).